The following is a 227-amino-acid chain: Cytochrome c oxidase subunit 2 (227 aa).

Topologically, residues Met-1–Ser-14 are mitochondrial intermembrane. Residues Pro-15 to Met-45 traverse the membrane as a helical segment. Topologically, residues Leu-46–Gln-59 are mitochondrial matrix. A helical membrane pass occupies residues Glu-60–Met-87. Topologically, residues Asp-88 to Ile-227 are mitochondrial intermembrane. Positions 161, 196, 198, 200, 204, and 207 each coordinate Cu cation. Glu-198 is a Mg(2+) binding site. Phosphotyrosine is present on Tyr-218.

It belongs to the cytochrome c oxidase subunit 2 family. As to quaternary structure, component of the cytochrome c oxidase (complex IV, CIV), a multisubunit enzyme composed of 14 subunits. The complex is composed of a catalytic core of 3 subunits MT-CO1, MT-CO2 and MT-CO3, encoded in the mitochondrial DNA, and 11 supernumerary subunits COX4I, COX5A, COX5B, COX6A, COX6B, COX6C, COX7A, COX7B, COX7C, COX8 and NDUFA4, which are encoded in the nuclear genome. The complex exists as a monomer or a dimer and forms supercomplexes (SCs) in the inner mitochondrial membrane with NADH-ubiquinone oxidoreductase (complex I, CI) and ubiquinol-cytochrome c oxidoreductase (cytochrome b-c1 complex, complex III, CIII), resulting in different assemblies (supercomplex SCI(1)III(2)IV(1) and megacomplex MCI(2)III(2)IV(2)). Found in a complex with TMEM177, COA6, COX18, COX20, SCO1 and SCO2. Interacts with TMEM177 in a COX20-dependent manner. Interacts with COX20. Interacts with COX16. Cu cation is required as a cofactor.

The protein resides in the mitochondrion inner membrane. The catalysed reaction is 4 Fe(II)-[cytochrome c] + O2 + 8 H(+)(in) = 4 Fe(III)-[cytochrome c] + 2 H2O + 4 H(+)(out). Functionally, component of the cytochrome c oxidase, the last enzyme in the mitochondrial electron transport chain which drives oxidative phosphorylation. The respiratory chain contains 3 multisubunit complexes succinate dehydrogenase (complex II, CII), ubiquinol-cytochrome c oxidoreductase (cytochrome b-c1 complex, complex III, CIII) and cytochrome c oxidase (complex IV, CIV), that cooperate to transfer electrons derived from NADH and succinate to molecular oxygen, creating an electrochemical gradient over the inner membrane that drives transmembrane transport and the ATP synthase. Cytochrome c oxidase is the component of the respiratory chain that catalyzes the reduction of oxygen to water. Electrons originating from reduced cytochrome c in the intermembrane space (IMS) are transferred via the dinuclear copper A center (CU(A)) of subunit 2 and heme A of subunit 1 to the active site in subunit 1, a binuclear center (BNC) formed by heme A3 and copper B (CU(B)). The BNC reduces molecular oxygen to 2 water molecules using 4 electrons from cytochrome c in the IMS and 4 protons from the mitochondrial matrix. This chain is Cytochrome c oxidase subunit 2 (MT-CO2), found in Oenomys hypoxanthus (Rufous-nosed rat).